The sequence spans 491 residues: Trigger factor (491 aa).

The PPIase FKBP-type domain occupies 173-260 (GDVAVVSFSG…LDELKGRELP (88 aa)). The tract at residues 435–491 (MVDPASEDKPAKASKAKSSKAKAEKEPAAEGQAKAKPAAKTSKSKTKAAEKLITPID) is disordered. Over residues 463–475 (AEGQAKAKPAAKT) the composition is skewed to low complexity.

The protein belongs to the FKBP-type PPIase family. Tig subfamily.

The protein localises to the cytoplasm. It catalyses the reaction [protein]-peptidylproline (omega=180) = [protein]-peptidylproline (omega=0). Its function is as follows. Involved in protein export. Acts as a chaperone by maintaining the newly synthesized protein in an open conformation. Functions as a peptidyl-prolyl cis-trans isomerase. The polypeptide is Trigger factor (Synechococcus sp. (strain RCC307)).